The following is a 11197-amino-acid chain: Nonribosomal peptide synthetase 5 (11197 aa).

The segment at 19-413 (AQRARKQPDA…DGTLQVVGHK (395 aa)) is adenylation (A) domain 1. A disordered region spans residues 426–452 (HASSSASSVGETPGVTGPISTPMGDSV). Residues 690-897 (KQLRQFCQEQ…LMDESMKQQI (208 aa)) form a condensation (C) domain 1 region. Residues 918–1310 (DAAQDYPDAP…GRHDGQLKVR (393 aa)) are adenylation (A) domain 2. One can recognise a Carrier 1 domain in the interval 1446-1522 (ADRSPVHMML…DMANNIAISE (77 aa)). At S1483 the chain carries O-(pantetheine 4'-phosphoryl)serine. Residues 1952–2380 (VEDVYPCSPV…SDISLMDPLS (429 aa)) form a condensation (C) domain 2 region. An adenylation (A) domain 3 region spans residues 2406–2805 (VARIEPDKMA…QRKDTQIKIR (400 aa)). The 77-residue stretch at 2945 to 3021 (DSLTSTEVTI…SLAAFVDYDS (77 aa)) folds into the Carrier 2 domain. S2982 bears the O-(pantetheine 4'-phosphoryl)serine mark. An epimerase (E) domain 1 region spans residues 3041–3481 (EESFALSPIQ…TSTMKSEFTL (441 aa)). The condensation (C) domain 3 stretch occupies residues 3515 to 3957 (EEIFPCSPMQ…VSPETRCELD (443 aa)). The tract at residues 3976–4371 (FEQQVEKIPD…RRRDNQVKVR (396 aa)) is adenylation (A) domain 4. Residues 4508–4584 (RKLTPMEQQL…ELANHARFKA (77 aa)) enclose the Carrier 3 domain. O-(pantetheine 4'-phosphoryl)serine is present on S4545. The interval 4603–5022 (FPLLPIQRMF…LNEYTAALRS (420 aa)) is epimerase (E) domain 2. The tract at residues 5069–5501 (ESIYPCSPLQ…LVGDSERQGL (433 aa)) is condensation (C) domain 4. Residues 5521 to 5918 (EAQVKAIPDN…RRKDTQVKVR (398 aa)) are adenylation (A) domain 5. A Carrier 4 domain is found at 6068–6141 (SEAEDIIRAV…ALAQFVSQST (74 aa)). S6102 bears the O-(pantetheine 4'-phosphoryl)serine mark. Residues 6162–6512 (FSLSPIQQMF…MEILFNYFGQ (351 aa)) are epimerase (E) domain 3. The tract at residues 6636–7076 (EEIFPCSPIQ…LVGAETRREM (441 aa)) is condensation (C) domain 5. The interval 7097-7491 (ERNSQAMPDR…RRRDNQVKVR (395 aa)) is adenylation (A) domain 6. The region spanning 7636-7712 (KPKTKMEEHF…DLAGRSRFKN (77 aa)) is the Carrier 5 domain. S7673 is modified (O-(pantetheine 4'-phosphoryl)serine). Residues 7733–8162 (ALLPIQRLFF…KYMLETLASQ (430 aa)) form an epimerase (E) domain 4 region. The segment at 8205-8638 (EASYPCSPLQ…MLGDSGRKRI (434 aa)) is condensation (C) domain 6. The tract at residues 8660 to 8832 (EAHVKESPNR…DHRATATEIV (173 aa)) is adenylation (A) domain 7. The 76-residue stretch at 9173–9248 (SAQTAVVQII…AMAAKAQQIG (76 aa)) folds into the Carrier 6 domain. S9209 carries the post-translational modification O-(pantetheine 4'-phosphoryl)serine. The interval 9565-9683 (RVKDMRRAIP…LHEVVSALQK (119 aa)) is epimerase (E) domain 5. Positions 9721–10116 (VEDVYPTSPM…LVPAKHMEQL (396 aa)) are condensation (C) domain 7. Residues 10136–10529 (DDMVRSTPTA…VGRKDTQIKI (394 aa)) form an adenylation (A) domain 8 region. One can recognise a Carrier 7 domain in the interval 10663-10749 (LDSSDYVAMQ…TLAVTIKADM (87 aa)). An O-(pantetheine 4'-phosphoryl)serine modification is found at S10708. The thioesterase (TE) domain stretch occupies residues 10806–11104 (NFLVTGSTGF…SLRPMSGPEW (299 aa)).

The protein belongs to the NRP synthetase family.

It participates in secondary metabolite biosynthesis. Its function is as follows. Nonribosomal peptide synthetase; part of the Fg3_54/C64 gene cluster that mediates the biosynthesis of the octapeptide fusaoctaxin A, a virulence factor that is required for cell-to-cell invasiveness of plant host. The 2 nonribosomal peptide synthetases NRPS9 and NRPS5 form an assembly line which likely utilizes GABA as a starter unit (loaded on the unique module M1 of NRPS9) and sequentially incorporates seven extender units composed of the residues L-Ala, L-allo-Ile, L-Ser, L-Val, L-Ser, L-Leu and L-Leu, respectively. During the process, each of the residues that are tethered on modules M3-M7 of NRPS5 containing an E domain can undergo an epimerization reaction to produce a D-configuration before the transpeptidation reaction occurs. The elongation of the peptidyl chain might be terminated by module M8-mediated L-Leu incorporation, followed by R domain-catalyzed 4 electron reduction to release the resulting octapeptide from the assembly line as an alcohol. Fusaoctaxin A is cleaved by the cluster specific ABC transporter FGM5 to the pentapeptide fusapentaxin A and the tripeptide fusatrixin A. The other enzymes from the cluster, FGM1, FGM2, FGM3 and FGM9 seem not to be involved in the biosynthesis of fusaoctaxin A and their functions have still to be determined. This chain is Nonribosomal peptide synthetase 5, found in Gibberella zeae (strain ATCC MYA-4620 / CBS 123657 / FGSC 9075 / NRRL 31084 / PH-1) (Wheat head blight fungus).